A 622-amino-acid polypeptide reads, in one-letter code: Cilia- and flagella-associated protein 206 (622 aa).

It belongs to the CFAP206 family.

Its subcellular location is the cytoplasm. It localises to the cytoskeleton. The protein localises to the cilium axoneme. The protein resides in the cilium basal body. In terms of biological role, essential for sperm motility and is involved in the regulation of the beating frequency of motile cilia on the epithelial cells of the respiratory tract. Required for the establishment of radial spokes in sperm flagella. This is Cilia- and flagella-associated protein 206 from Bos taurus (Bovine).